Reading from the N-terminus, the 587-residue chain is DELLA protein RGA (587 aa).

Residues 1–26 (MKRDHHQFQGRLSNHGTSSSSSSISK) are disordered. The DELLA motif signature appears at 44-48 (DELLA). Residues 66 to 70 (LEQLE) carry the LEXLE motif motif. Residues 89 to 93 (VHYNP) carry the VHYNP motif motif. The interval 152-181 (IDSSSSSNNQNKRLKSCSSPDSMVTSTSTG) is disordered. Residues 153-175 (DSSSSSNNQNKRLKSCSSPDSMV) show a composition bias toward polar residues. In terms of domain architecture, GRAS spans 212–581 (VDSQENGVRL…RPLITTSAWK (370 aa)). Positions 219–273 (VRLVHALMACAEAIQQNNLTLAEALVKQIGCLAVSQAGAMRKVATYFAEALARRI) are leucine repeat I (LRI). The interval 292-357 (QMHFYETCPY…GGPPTFRLTG (66 aa)) is VHIID. The short motif at 323-327 (VHVID) is the VHIID element. Residues 371 to 403 (EVGCKLAQLAEAIHVEFEYRGFVANSLADLDAS) form a leucine repeat II (LRII) region. The interval 415–502 (VAVNSVFELH…EVYLGKQICN (88 aa)) is PFYRE. The LXXLL motif signature appears at 423 to 427 (LHKLL). The interval 505–581 (ACEGPDRVER…RPLITTSAWK (77 aa)) is SAW.

This sequence belongs to the GRAS family. DELLA subfamily. As to quaternary structure, interacts directly with the GID2/SLY1 component of the SCF(GID2) complex. Interacts (via N-terminus) with GID1A, GID1B and GID1B (via N-terminus). Binds to bHLH transcription factors such as MYC2, PIF1, PIF4, PIF6 and SPT. Interacts with the BOI proteins BOI, BRG1, BRG2 and BRG3. Interacts with NFYC9. Interacts with TOPP4. Interacts with FLZ5. Binds to zinc finger proteins MGP/IDD3, IDD4, IDD5, BIB/IDD9 and JKD/IDD10 in the nucleus. Binds to and coactivates GAF1/IDD2 and ENY/IDD1. Binds to PDF2 and ATML1. Phosphorylated. Phosphorylation may increase the interaction with GID2. Post-translationally, gibberellin (GA) induces dephosphorylation of RGA by TOPP4 and subsequent degradation by the proteasomal pathway. In terms of processing, ubiquitinated. Upon GA application it is ubiquitinated by the SCF(GID2) complex, leading to its subsequent degradation. O-fucosylated by SPY. O-fucosylation enhances RGA activity by promoting RGA binding to key transcription factors in brassinosteroid and light signaling pathways. In terms of tissue distribution, ubiquitously expressed. Expressed in roots, rosette leaves, bolting and mature stems, young and mature siliques, flower buds and influorescences.

It is found in the nucleus. In terms of biological role, probable transcriptional regulator that acts as a repressor of the gibberellin (GA) signaling pathway. Probably acts by participating in large multiprotein complexes that repress transcription of GA-inducible genes. Positively regulates XERICO expression in seeds. Upon GA application, it is degraded by the proteasome, allowing the GA signaling pathway. Compared to other DELLA proteins, it is the most sensitive to GA application. No effect of the BOI proteins on its stability. Its activity is probably regulated by other phytohormones such as auxin and ethylene, attenuation of auxin transport delaying its GA-induced degradation. Involved in the regulation of seed dormancy and germination, including glucose-induced delay of seed germination. The protein is DELLA protein RGA of Arabidopsis thaliana (Mouse-ear cress).